Reading from the N-terminus, the 465-residue chain is Phosphatidylserine synthase 1 (465 aa).

The Cytoplasmic portion of the chain corresponds to 1–35 (MVSAMRSRTLSKDDVNYKMHFRMINEQQVEDITID). Residues 36-56 (FFYKPHTITLLTFTTVSLMYF) traverse the membrane as a helical segment. At 57 to 68 (AFTRENTSQEDN) the chain is on the lumenal side. A helical membrane pass occupies residues 69–89 (IWKGILSVIFFFLIISVLAFP). Topologically, residues 90 to 102 (NGPFTRPHPAIWR) are cytoplasmic. Residues 103–123 (MVFGLSVLYFLFLVFLLFLNV) form a helical membrane-spanning segment. Over 124–186 (EQVKAVMYWL…AMKALLIRSY (63 aa)) the chain is Lumenal. The chain crosses the membrane as a helical span at residues 187–207 (GLCWTISITWEMTELFFMHLL). Over 208–216 (PNFAECWWD) the chain is Cytoplasmic. A helical membrane pass occupies residues 217-237 (QVILDILLCNGGGILLGMVVC). The Lumenal segment spans residues 238 to 286 (RFLEMRTYHWASFKDIHTTTGKIKRAVLQFTPASWIYVRWFDPKSSFQR). The chain crosses the membrane as a helical span at residues 287-307 (VAGVYLFMIIWQLTELNTFFL). Topologically, residues 308 to 319 (KHIFVFQASHPL) are cytoplasmic. Residues 320–342 (SWCRILFIGIITAPTVRQYYAYL) form a helical membrane-spanning segment. Over 343-355 (TDTQCKRVGTQCW) the chain is Lumenal. A helical transmembrane segment spans residues 356 to 376 (VFGAIAFLEATVCIKFGQDLF). Over 377-383 (SKTHLLY) the chain is Cytoplasmic. Residues 384–404 (VFLWLFSVAVITFLCLYGMVW) traverse the membrane as a helical segment. Residues 405 to 465 (YADYCGQREK…GKVTNGVGKK (61 aa)) lie on the Lumenal side of the membrane. Positions 440–465 (PVKQNEGTSRRKNRHKGKVTNGVGKK) are disordered. The span at 449 to 465 (RRKNRHKGKVTNGVGKK) shows a compositional bias: basic residues.

This sequence belongs to the phosphatidyl serine synthase family.

Its subcellular location is the endoplasmic reticulum membrane. The enzyme catalyses a 1,2-diacyl-sn-glycero-3-phosphoethanolamine + L-serine = a 1,2-diacyl-sn-glycero-3-phospho-L-serine + ethanolamine. It catalyses the reaction a 1,2-diacyl-sn-glycero-3-phosphocholine + L-serine = a 1,2-diacyl-sn-glycero-3-phospho-L-serine + choline. The protein operates within phospholipid metabolism; phosphatidylserine biosynthesis. Catalyzes a base-exchange reaction in which the polar head group of phosphatidylethanolamine (PE) or phosphatidylcholine (PC) is replaced by L-serine. Catalyzes mainly the conversion of phosphatidylcholine but also converts, in vitro and to a lesser extent, phosphatidylethanolamine. The sequence is that of Phosphatidylserine synthase 1 (ptdss1) from Xenopus tropicalis (Western clawed frog).